An 80-amino-acid polypeptide reads, in one-letter code: Small pacifastin protease inhibitor (80 aa).

A signal peptide spans 1 to 24; the sequence is MSKVLKVGLLLLLVAVAASAYAVA. A propeptide spanning residues 25-47 is cleaved from the precursor; it reads EENGAPKENKQLPQIDDYGVTNK. The Pacifastin domain maps to 45-80; sequence TNKCPANQPFKWNCNYCTCGPEGKDASCTRMACPQH. 3 cysteine pairs are disulfide-bonded: C48–C63, C58–C77, and C61–C72.

The protein belongs to the protease inhibitor I19 family. Expressed in the venom apparatus. Low transcript levels are also detected in other tissues.

It is found in the secreted. Its function is as follows. Parasitic wasp protein that may interfere with the host immune response. The recombinant protein inhibits trypsin activity and prophenoloxidase (PPO) activation, an enzyme essential for both clotting and insect innate immune responses. It does not inhibit activity of chymotrypsin and protease K, and has no effect on phenoloxidase (PO) activity. The protein is Small pacifastin protease inhibitor of Nasonia vitripennis (Parasitic wasp).